A 141-amino-acid polypeptide reads, in one-letter code: Acetyltransferase YpeA (141 aa).

Positions 1–141 (MEIRVFRQED…GKRLIEDEEY (141 aa)) constitute an N-acetyltransferase domain.

It belongs to the acetyltransferase family. YpeA subfamily.

This is Acetyltransferase YpeA from Escherichia coli O157:H7.